A 349-amino-acid chain; its full sequence is Oxygen-dependent coproporphyrinogen-III oxidase (349 aa).

Disordered regions lie at residues methionine 1–arginine 21 and serine 37–lysine 60. Substrate is bound at residue serine 105. 2 residues coordinate a divalent metal cation: histidine 109 and histidine 119. Catalysis depends on histidine 119, which acts as the Proton donor. Asparagine 121 to arginine 123 contacts substrate. A divalent metal cation-binding residues include histidine 153 and histidine 183. An important for dimerization region spans residues tyrosine 273–glutamate 308.

This sequence belongs to the aerobic coproporphyrinogen-III oxidase family. In terms of assembly, homodimer. A divalent metal cation serves as cofactor.

The protein resides in the cytoplasm. It catalyses the reaction coproporphyrinogen III + O2 + 2 H(+) = protoporphyrinogen IX + 2 CO2 + 2 H2O. It participates in porphyrin-containing compound metabolism; protoporphyrin-IX biosynthesis; protoporphyrinogen-IX from coproporphyrinogen-III (O2 route): step 1/1. Involved in the heme and chlorophyll biosynthesis. Catalyzes the aerobic oxidative decarboxylation of propionate groups of rings A and B of coproporphyrinogen-III to yield the vinyl groups in protoporphyrinogen-IX. This chain is Oxygen-dependent coproporphyrinogen-III oxidase, found in Prochlorococcus marinus (strain MIT 9313).